The primary structure comprises 466 residues: Ribulose bisphosphate carboxylase large chain (466 aa).

Lys-5 is modified (N6,N6,N6-trimethyllysine). Substrate-binding residues include Asn-114 and Thr-164. Lys-166 serves as the catalytic Proton acceptor. A substrate-binding site is contributed by Lys-168. Residues Lys-192, Asp-194, and Glu-195 each contribute to the Mg(2+) site. An N6-carboxylysine modification is found at Lys-192. The Proton acceptor role is filled by His-285. Residues Arg-286, His-318, and Ser-370 each coordinate substrate.

This sequence belongs to the RuBisCO large chain family. Type I subfamily. In terms of assembly, heterohexadecamer of 8 large chains and 8 small chains; disulfide-linked. The disulfide link is formed within the large subunit homodimers. Mg(2+) is required as a cofactor. Post-translationally, the disulfide bond which can form in the large chain dimeric partners within the hexadecamer appears to be associated with oxidative stress and protein turnover.

The protein localises to the plastid. Its subcellular location is the chloroplast. It carries out the reaction 2 (2R)-3-phosphoglycerate + 2 H(+) = D-ribulose 1,5-bisphosphate + CO2 + H2O. It catalyses the reaction D-ribulose 1,5-bisphosphate + O2 = 2-phosphoglycolate + (2R)-3-phosphoglycerate + 2 H(+). RuBisCO catalyzes two reactions: the carboxylation of D-ribulose 1,5-bisphosphate, the primary event in carbon dioxide fixation, as well as the oxidative fragmentation of the pentose substrate in the photorespiration process. Both reactions occur simultaneously and in competition at the same active site. The chain is Ribulose bisphosphate carboxylase large chain from Berzelia lanuginosa (Buttonbush).